A 684-amino-acid polypeptide reads, in one-letter code: RNA helicase NPH-II (684 aa).

One can recognise a Helicase ATP-binding domain in the interval 184 to 359 (FRAWAARRPT…EFFPDAEFVH (176 aa)). 197 to 204 (GGTGVGKT) contacts ATP. Residues 308–311 (DEVH) carry the DEXH box motif. Residues 392 to 563 (NVSAALSAHR…DLYVQPSDLE (172 aa)) form the Helicase C-terminal domain.

Belongs to the DEAD box helicase family. DEAH subfamily. In terms of assembly, monomer.

Its subcellular location is the virion. The enzyme catalyses ATP + H2O = ADP + phosphate + H(+). Its function is as follows. NTP-dependent helicase that catalyzes unidirectional unwinding of 3'tailed duplex RNAs and plays an important role during transcription of early mRNAs, presumably by preventing R-loop formation behind the elongating RNA polymerase. Might also play a role in the export of newly synthesized mRNA chains out of the core into the cytoplasm. Required for replication and propagation of viral particles. In Homo sapiens (Human), this protein is RNA helicase NPH-II (NPH2).